Consider the following 392-residue polypeptide: Probable tRNA sulfurtransferase (392 aa).

The THUMP domain occupies 63-169; it reads GRAADAAADT…DAEAFVFLTH (107 aa). ATP-binding positions include 187-188, arginine 270, glycine 292, and glutamine 301; that span reads LV.

Belongs to the ThiI family.

It is found in the cytoplasm. It catalyses the reaction [ThiI sulfur-carrier protein]-S-sulfanyl-L-cysteine + a uridine in tRNA + 2 reduced [2Fe-2S]-[ferredoxin] + ATP + H(+) = [ThiI sulfur-carrier protein]-L-cysteine + a 4-thiouridine in tRNA + 2 oxidized [2Fe-2S]-[ferredoxin] + AMP + diphosphate. The enzyme catalyses [ThiS sulfur-carrier protein]-C-terminal Gly-Gly-AMP + S-sulfanyl-L-cysteinyl-[cysteine desulfurase] + AH2 = [ThiS sulfur-carrier protein]-C-terminal-Gly-aminoethanethioate + L-cysteinyl-[cysteine desulfurase] + A + AMP + 2 H(+). The protein operates within cofactor biosynthesis; thiamine diphosphate biosynthesis. In terms of biological role, catalyzes the ATP-dependent transfer of a sulfur to tRNA to produce 4-thiouridine in position 8 of tRNAs, which functions as a near-UV photosensor. Also catalyzes the transfer of sulfur to the sulfur carrier protein ThiS, forming ThiS-thiocarboxylate. This is a step in the synthesis of thiazole, in the thiamine biosynthesis pathway. The sulfur is donated as persulfide by IscS. This Halobacterium salinarum (strain ATCC 29341 / DSM 671 / R1) protein is Probable tRNA sulfurtransferase.